A 220-amino-acid polypeptide reads, in one-letter code: MQHQLVVKRLGRQDYEPVWKAMHEFTDQRTDDTPDEVWLVEHNPVFTQGQAGKAEHLINTGDIPVVQSDRGGQVTYHGPGQLVAYFLINLRRKKLGVRDLVTHIENLVINTLKAYNIDSAARPDAPGVYVDGKKICSLGLRIRKGCSFHGLALNVNMDLGPFLRINPCGYEGMEMVQVSQVGGPEDIEAVEKQLIQELVTLLDYEQVEFSTEAPSQGNKA.

In terms of domain architecture, BPL/LPL catalytic spans 31-206; it reads DDTPDEVWLV…ELVTLLDYEQ (176 aa). Substrate contacts are provided by residues 70–77, 137–139, and 150–152; these read RGGQVTYH, SLG, and GLA. Cys-168 functions as the Acyl-thioester intermediate in the catalytic mechanism.

The protein belongs to the LipB family.

It is found in the cytoplasm. It catalyses the reaction octanoyl-[ACP] + L-lysyl-[protein] = N(6)-octanoyl-L-lysyl-[protein] + holo-[ACP] + H(+). It participates in protein modification; protein lipoylation via endogenous pathway; protein N(6)-(lipoyl)lysine from octanoyl-[acyl-carrier-protein]: step 1/2. Functionally, catalyzes the transfer of endogenously produced octanoic acid from octanoyl-acyl-carrier-protein onto the lipoyl domains of lipoate-dependent enzymes. Lipoyl-ACP can also act as a substrate although octanoyl-ACP is likely to be the physiological substrate. The protein is Octanoyltransferase of Vibrio campbellii (strain ATCC BAA-1116).